Consider the following 1416-residue polypeptide: DNA-directed RNA polymerase subunit beta' (1416 aa).

Zn(2+) contacts are provided by Cys-71, Cys-73, Cys-86, and Cys-89. Residues Asp-461, Asp-463, and Asp-465 each coordinate Mg(2+). Zn(2+) is bound by residues Cys-815, Cys-889, Cys-896, and Cys-899.

This sequence belongs to the RNA polymerase beta' chain family. As to quaternary structure, the RNAP catalytic core consists of 2 alpha, 1 beta, 1 beta' and 1 omega subunit. When a sigma factor is associated with the core the holoenzyme is formed, which can initiate transcription. Mg(2+) serves as cofactor. It depends on Zn(2+) as a cofactor.

The enzyme catalyses RNA(n) + a ribonucleoside 5'-triphosphate = RNA(n+1) + diphosphate. Functionally, DNA-dependent RNA polymerase catalyzes the transcription of DNA into RNA using the four ribonucleoside triphosphates as substrates. The polypeptide is DNA-directed RNA polymerase subunit beta' (Haemophilus influenzae (strain PittGG)).